The primary structure comprises 274 residues: Chromatin modification-related protein YNG2 (274 aa).

Residues 121 to 194 (EDEMESGPDF…ASTEREGTLD (74 aa)) form a disordered region. A compositionally biased stretch (basic and acidic residues) spans 166–180 (THREKSYNKGDDTAD). The segment at 215-264 (NLYCFCQRVSFGEMVACDGPNCKYEWFHYECVNLTEPPKGTWYCPDCKQE) adopts a PHD-type zinc-finger fold. 8 residues coordinate Zn(2+): cysteine 218, cysteine 220, cysteine 231, cysteine 236, histidine 242, cysteine 245, cysteine 258, and cysteine 261.

Belongs to the ING family. In terms of assembly, interacts with H3K4me3 and to a lesser extent with H3K4me2. Component of the NuA4 histone acetyltransferase complex.

The protein resides in the nucleus. In terms of biological role, component of the NuA4 histone acetyltransferase complex which is involved in transcriptional activation of selected genes principally by acetylation of nucleosomal histone H4 and H2A. The NuA4 complex is also involved in DNA repair. Involved in cell cycle progression and meiosis. This Candida glabrata (strain ATCC 2001 / BCRC 20586 / JCM 3761 / NBRC 0622 / NRRL Y-65 / CBS 138) (Yeast) protein is Chromatin modification-related protein YNG2 (YNG2).